The primary structure comprises 758 residues: 5-methyltetrahydropteroyltriglutamate--homocysteine methyltransferase (758 aa).

5-methyltetrahydropteroyltri-L-glutamate-binding positions include 17–20 (RELK) and Lys114. Residues 429–431 (IGS) and Glu482 contribute to the L-homocysteine site. Residues 429-431 (IGS) and Glu482 each bind L-methionine. Residues 513–514 (RC) and Trp559 contribute to the 5-methyltetrahydropteroyltri-L-glutamate site. L-homocysteine is bound at residue Asp597. Asp597 is an L-methionine binding site. Glu603 provides a ligand contact to 5-methyltetrahydropteroyltri-L-glutamate. His639, Cys641, and Glu663 together coordinate Zn(2+). His692 serves as the catalytic Proton donor. Cys724 lines the Zn(2+) pocket.

Belongs to the vitamin-B12 independent methionine synthase family. Zn(2+) serves as cofactor.

It carries out the reaction 5-methyltetrahydropteroyltri-L-glutamate + L-homocysteine = tetrahydropteroyltri-L-glutamate + L-methionine. The protein operates within amino-acid biosynthesis; L-methionine biosynthesis via de novo pathway; L-methionine from L-homocysteine (MetE route): step 1/1. In terms of biological role, catalyzes the transfer of a methyl group from 5-methyltetrahydrofolate to homocysteine resulting in methionine formation. This is 5-methyltetrahydropteroyltriglutamate--homocysteine methyltransferase from Buchnera aphidicola subsp. Acyrthosiphon pisum (strain APS) (Acyrthosiphon pisum symbiotic bacterium).